We begin with the raw amino-acid sequence, 203 residues long: Orotate phosphoribosyltransferase (203 aa).

5-phospho-alpha-D-ribose 1-diphosphate contacts are provided by residues Arg94, Lys95, Lys98, His100, and 119–127 (DDVATTGGS). The orotate site is built by Thr123 and Arg151.

Belongs to the purine/pyrimidine phosphoribosyltransferase family. PyrE subfamily. Homodimer. Mg(2+) serves as cofactor.

It catalyses the reaction orotidine 5'-phosphate + diphosphate = orotate + 5-phospho-alpha-D-ribose 1-diphosphate. It participates in pyrimidine metabolism; UMP biosynthesis via de novo pathway; UMP from orotate: step 1/2. Catalyzes the transfer of a ribosyl phosphate group from 5-phosphoribose 1-diphosphate to orotate, leading to the formation of orotidine monophosphate (OMP). The chain is Orotate phosphoribosyltransferase from Staphylothermus marinus (strain ATCC 43588 / DSM 3639 / JCM 9404 / F1).